A 105-amino-acid polypeptide reads, in one-letter code: Large ribosomal subunit protein eL42 (105 aa).

The tract at residues 23–52 (KVTQYKKGKESRLAQGRRRYDSKQKGFGGQ) is disordered. Residues 29–46 (KGKESRLAQGRRRYDSKQ) show a composition bias toward basic and acidic residues.

Belongs to the eukaryotic ribosomal protein eL42 family.

This is Large ribosomal subunit protein eL42 (rpl-44) from Brugia malayi (Filarial nematode worm).